The primary structure comprises 267 residues: Dolichol-phosphate mannosyltransferase (267 aa).

Ser-2 carries the post-translational modification N-acetylserine. The Cytoplasmic segment spans residues 2 to 238; it reads SIEYSVIVPA…QQLKELYVFK (237 aa). 10 residues coordinate GDP-alpha-D-mannose: Pro-10, Tyr-12, Glu-14, Val-42, Asp-44, Asp-95, Ala-96, Asp-97, Gln-99, and Arg-122. Mg(2+) is bound by residues Asp-97 and Gln-99. Residues Asp-97 and Gln-99 each contribute to the Mn(2+) site. Position 141 is a phosphoserine; by PKA (Ser-141). Residues Lys-183, Arg-212, and Lys-218 each coordinate GDP-alpha-D-mannose. The helical; Anchor for type IV membrane protein transmembrane segment at 239–259 threads the bilayer; that stretch reads FGANNLILFITFWSILFFYVC. The Lumenal segment spans residues 260 to 267; it reads YQLYHLVF.

This sequence belongs to the glycosyltransferase 2 family. As to quaternary structure, interacts with the C-terminus of SAC1, thereby sequestering it to the endoplasmic reticulum in exponentially growing cells. Under nutrient limitation conditions, this interaction is rapidly abolished. Mg(2+) serves as cofactor. It depends on Mn(2+) as a cofactor. The cofactor is Ca(2+).

Its subcellular location is the endoplasmic reticulum membrane. The enzyme catalyses a di-trans,poly-cis-dolichyl phosphate + GDP-alpha-D-mannose = a di-trans,poly-cis-dolichyl beta-D-mannosyl phosphate + GDP. Its pathway is protein modification; protein glycosylation. With respect to regulation, inhibited by acetylsalicylic acid (aspirin). Transfers mannose from GDP-mannose to dolichol monophosphate to form dolichol phosphate mannose (Dol-P-Man) which is the mannosyl donor in pathways leading to N-glycosylation, glycosyl phosphatidylinositol membrane anchoring, and O-mannosylation of proteins. This Saccharomyces cerevisiae (strain ATCC 204508 / S288c) (Baker's yeast) protein is Dolichol-phosphate mannosyltransferase.